Consider the following 329-residue polypeptide: (12E)-labda-8(17),12,14-triene synthase (329 aa).

Mg(2+) contacts are provided by Asp90 and Glu95. Positions 90-95 (DDMHGE) match the DDXXXE motif motif. Residue Arg184 coordinates substrate. Mg(2+) contacts are provided by Asn230 and Ser234. The NXXXSXXXE motif signature appears at 230–238 (NDLASYERE). Arg237 is a binding site for substrate. Glu238 lines the Mg(2+) pocket. 316–317 (RY) provides a ligand contact to substrate.

This sequence belongs to the terpene synthase family. Mg(2+) serves as cofactor.

The enzyme catalyses (+)-copalyl diphosphate = (12E)-labda-8(17),12,14-triene + diphosphate. In terms of biological role, involved in the biosynthesis of the mercapturic acid derivative diterpene cyslabdan A, a potentiator of the beta-lactam antibiotic imipenem. Catalyzes the conversion of (+)-copalyl diphosphate to yield labda-8(17),12(E),14-triene (biformene). This Streptomyces cyslabdanicus protein is (12E)-labda-8(17),12,14-triene synthase.